Consider the following 411-residue polypeptide: Lissencephaly-1 homolog (411 aa).

One can recognise a LisH domain in the interval 9-41 (QREELNQAIADYLGSNGYADSLETFRKEADLST). Residues 56–83 (TSVIRLQKKVMELEAKLTEAEKEVIEGA) are a coiled coil. 7 WD repeats span residues 106 to 147 (GHRA…RSLK), 148 to 187 (GHTD…ECIK), 191 to 230 (GHDH…CVKT), 233 to 272 (GHRE…CKVE), 275 to 334 (DHEH…CLLT), 337 to 376 (GHDN…CMKT), and 379 to 411 (AHQH…WECR).

The protein belongs to the WD repeat LIS1/nudF family.

The protein resides in the cytoplasm. Its subcellular location is the cytoskeleton. It is found in the microtubule organizing center. The protein localises to the centrosome. Positively regulates the activity of the minus-end directed microtubule motor protein dynein. May enhance dynein-mediated microtubule sliding by targeting dynein to the microtubule plus end. Required for several dynein- and microtubule-dependent processes. The protein is Lissencephaly-1 homolog of Drosophila yakuba (Fruit fly).